The chain runs to 296 residues: Nucleotide-binding protein SAG0531 (296 aa).

13–20 (GMSGAGKT) is a binding site for ATP. 63–66 (DMRS) contacts GTP.

The protein belongs to the RapZ-like family.

Its function is as follows. Displays ATPase and GTPase activities. The chain is Nucleotide-binding protein SAG0531 from Streptococcus agalactiae serotype V (strain ATCC BAA-611 / 2603 V/R).